The chain runs to 475 residues: Ribulose bisphosphate carboxylase large chain (475 aa).

Residues 1-2 (MS) constitute a propeptide that is removed on maturation. N-acetylproline is present on proline 3. Lysine 14 carries the N6,N6,N6-trimethyllysine modification. Substrate-binding residues include asparagine 123 and threonine 173. Residue lysine 175 is the Proton acceptor of the active site. Residue lysine 177 coordinates substrate. The Mg(2+) site is built by lysine 201, aspartate 203, and glutamate 204. Lysine 201 is modified (N6-carboxylysine). Catalysis depends on histidine 294, which acts as the Proton acceptor. Residues arginine 295, histidine 327, and serine 379 each contribute to the substrate site.

The protein belongs to the RuBisCO large chain family. Type I subfamily. As to quaternary structure, heterohexadecamer of 8 large chains and 8 small chains; disulfide-linked. The disulfide link is formed within the large subunit homodimers. Mg(2+) is required as a cofactor. The disulfide bond which can form in the large chain dimeric partners within the hexadecamer appears to be associated with oxidative stress and protein turnover.

It is found in the plastid. Its subcellular location is the chloroplast. The enzyme catalyses 2 (2R)-3-phosphoglycerate + 2 H(+) = D-ribulose 1,5-bisphosphate + CO2 + H2O. The catalysed reaction is D-ribulose 1,5-bisphosphate + O2 = 2-phosphoglycolate + (2R)-3-phosphoglycerate + 2 H(+). RuBisCO catalyzes two reactions: the carboxylation of D-ribulose 1,5-bisphosphate, the primary event in carbon dioxide fixation, as well as the oxidative fragmentation of the pentose substrate in the photorespiration process. Both reactions occur simultaneously and in competition at the same active site. This chain is Ribulose bisphosphate carboxylase large chain, found in Pinus thunbergii (Japanese black pine).